The primary structure comprises 171 residues: Myosin regulatory light chain 12A (171 aa).

Thr18 carries the post-translational modification Phosphothreonine; by MLCK. Residue Ser19 is modified to Phosphoserine; by MLCK. 3 EF-hand domains span residues Ser28–Asn63, Asp97–Arg132, and Phe133–Asp168. Ca(2+) is bound by residues Asp41, Asn43, Asp45, and Asp52.

In terms of assembly, myosin is a hexamer of 2 heavy chains and 4 light chains. Phosphorylation increases the actin-activated myosin ATPase activity and thereby regulates the contractile activity. It is required to generate the driving force in the migration of the cells but not necessary for localization of myosin-2 at the leading edge.

In terms of biological role, myosin regulatory subunit that plays an important role in regulation of both smooth muscle and nonmuscle cell contractile activity via its phosphorylation. Implicated in cytokinesis, receptor capping, and cell locomotion. This chain is Myosin regulatory light chain 12A (MYL12A), found in Homo sapiens (Human).